The following is a 447-amino-acid chain: BAG family molecular chaperone regulator 5 (447 aa).

BAG domains lie at S9–A86, Q95–M167, S182–E260, S275–E350, and S365–S442.

As to quaternary structure, binds to the ATPase domain of HSP/HSP70 chaperones. Binds PRKN. Interacts complex with HSPA8 and JPH2.

Its function is as follows. Co-chaperone for HSP/HSP70 proteins. It functions as a nucleotide-exchange factor promoting the release of ADP from HSP70, thereby activating Hsp70-mediated protein refolding. Has an essential role in maintaining proteostasis at junctional membrane complexes (JMC), where it may function as a scaffold between the HSPA8 chaperone and JMC proteins enabling correct, HSPA8-dependent JMC protein folding. Inhibits both auto-ubiquitination of PRKN and ubiquitination of target proteins by PRKN. The chain is BAG family molecular chaperone regulator 5 (BAG5) from Bos taurus (Bovine).